Here is a 226-residue protein sequence, read N- to C-terminus: NAD(P)H-hydrate epimerase (226 aa).

The region spanning alanine 10–leucine 215 is the YjeF N-terminal domain. Asparagine 58–aspartate 62 is a binding site for (6S)-NADPHX. K(+)-binding residues include asparagine 59 and aspartate 123. Residues glycine 127–proline 133 and aspartate 156 contribute to the (6S)-NADPHX site. Residue serine 159 coordinates K(+).

It belongs to the NnrE/AIBP family. It depends on K(+) as a cofactor.

The enzyme catalyses (6R)-NADHX = (6S)-NADHX. It catalyses the reaction (6R)-NADPHX = (6S)-NADPHX. Its function is as follows. Catalyzes the epimerization of the S- and R-forms of NAD(P)HX, a damaged form of NAD(P)H that is a result of enzymatic or heat-dependent hydration. This is a prerequisite for the S-specific NAD(P)H-hydrate dehydratase to allow the repair of both epimers of NAD(P)HX. This chain is NAD(P)H-hydrate epimerase, found in Drosophila pseudoobscura pseudoobscura (Fruit fly).